Consider the following 415-residue polypeptide: MSEVSVKAKLAKEAAAEMIMKTTAEKDEALSLIANGLRKELDFLLAENAKDIVNGKENGLTPDIIDRLSLDEKRIRDIADAVELLIDLADPIGDSLETIEKENGLFIEKIRVPLGVVGMIYEARPNVTVDAATLCLKTGNAVVLRGSSSAIHSNKALVSVIYRALEQSALPIHAVQLIEDTSRETAKELFTLNDGLDVLIPRGGKKLIDLVVRESTVPVLETGAGNCHIFIDETAKPQMAEKVVVNAKTQRPSVCNAIESLLIHKAWARQHGKELLDQLENAGVEIRGDELVCELHPSSKQASKEDWETEFLAPVLSVKTVENVQEAVKHIQQYGTNHSEAILTENDKNAVYFQTAVDAAAVYHNASTRFTDGFEFGYGAEIGISTQKLHARGPMGLPALTSTKYIIKGTGQIRE.

Belongs to the gamma-glutamyl phosphate reductase family.

It is found in the cytoplasm. It carries out the reaction L-glutamate 5-semialdehyde + phosphate + NADP(+) = L-glutamyl 5-phosphate + NADPH + H(+). It participates in amino-acid biosynthesis; L-proline biosynthesis; L-glutamate 5-semialdehyde from L-glutamate: step 2/2. Its function is as follows. Catalyzes the NADPH-dependent reduction of L-glutamate 5-phosphate into L-glutamate 5-semialdehyde and phosphate. The product spontaneously undergoes cyclization to form 1-pyrroline-5-carboxylate. The polypeptide is Gamma-glutamyl phosphate reductase (Bacillus subtilis (strain 168)).